A 151-amino-acid polypeptide reads, in one-letter code: MGRMHAPGKGISSSALPYRRTPPSWLKTTSEEVVEQIVKLARKGLTPSQIGVTLRNSHGIPQVRFVTGNKILRILKSQGLGPSIPEDLWHLIKKAVAVRKHMETNRKDKDSKFRLILIESRIHRLARYYKTKQQIPPTFKYDSATASTLIA.

It belongs to the universal ribosomal protein uS15 family.

This is Small ribosomal subunit protein uS15 (RPS13) from Agaricus bisporus (White button mushroom).